Consider the following 376-residue polypeptide: uncharacterized protein (376 aa).

Residues 1 to 31 form the signal peptide; that stretch reads MSRHKVYKAISSYVIIAIIIIAIVAVVGVLL. The interval 37 to 57 is disordered; the sequence is SSSSVTSTTTPTTSSSVSPSS.

This sequence belongs to the bacterial solute-binding protein 1 family. WtpA subfamily.

This is an uncharacterized protein from Sulfurisphaera tokodaii (strain DSM 16993 / JCM 10545 / NBRC 100140 / 7) (Sulfolobus tokodaii).